The chain runs to 155 residues: 17.3 kDa class II heat shock protein (155 aa).

One can recognise a sHSP domain in the interval 39 to 155 (DAKAMAATPA…KPKTIEVKVA (117 aa)).

It belongs to the small heat shock protein (HSP20) family.

It localises to the cytoplasm. The chain is 17.3 kDa class II heat shock protein from Solanum peruvianum (Peruvian tomato).